The primary structure comprises 439 residues: ATP-dependent RNA helicase RhlB (439 aa).

The Q motif motif lies at 9 to 37 (QKFADLPLHPEVKQALAENGFEFCTPIQA). The 180-residue stretch at 40-219 (LPVLLQSKDI…YDHMNDPVKV (180 aa)) folds into the Helicase ATP-binding domain. 53–60 (AQTGTGKT) contacts ATP. A DEAD box motif is present at residues 165-168 (DEAD). The Helicase C-terminal domain occupies 243–390 (KMRLLLTLIE…VSNYDRDALL (148 aa)). Residues 395-439 (SPVKIHRKHPAGARNLRERSGAGRTPGAHRSGGRPPRHDRTRRQP) are disordered. Basic residues predominate over residues 425–439 (SGGRPPRHDRTRRQP).

It belongs to the DEAD box helicase family. RhlB subfamily. Component of the RNA degradosome, which is a multiprotein complex involved in RNA processing and mRNA degradation.

It localises to the cytoplasm. It catalyses the reaction ATP + H2O = ADP + phosphate + H(+). Functionally, DEAD-box RNA helicase involved in RNA degradation. Has RNA-dependent ATPase activity and unwinds double-stranded RNA. In Shewanella oneidensis (strain ATCC 700550 / JCM 31522 / CIP 106686 / LMG 19005 / NCIMB 14063 / MR-1), this protein is ATP-dependent RNA helicase RhlB.